The primary structure comprises 145 residues: 3-hydroxyacyl-[acyl-carrier-protein] dehydratase FabZ (145 aa).

Residue His49 is part of the active site.

The protein belongs to the thioester dehydratase family. FabZ subfamily.

The protein resides in the cytoplasm. It carries out the reaction a (3R)-hydroxyacyl-[ACP] = a (2E)-enoyl-[ACP] + H2O. Its function is as follows. Involved in unsaturated fatty acids biosynthesis. Catalyzes the dehydration of short chain beta-hydroxyacyl-ACPs and long chain saturated and unsaturated beta-hydroxyacyl-ACPs. The sequence is that of 3-hydroxyacyl-[acyl-carrier-protein] dehydratase FabZ from Ehrlichia ruminantium (strain Welgevonden).